A 491-amino-acid polypeptide reads, in one-letter code: Glutathione synthetase GSH2 (491 aa).

Arginine 128 contributes to the substrate binding site. Residue glutamate 146 coordinates ATP. Mg(2+)-binding residues include glutamate 146 and asparagine 148. Substrate contacts are provided by residues valine 150–serine 153, glutamate 228–asparagine 230, glutamine 234, and arginine 285–tyrosine 288. Residues lysine 324, lysine 382 to asparagine 391, tyrosine 393, methionine 415 to isoleucine 418, and glutamate 442 contribute to the ATP site. Mg(2+) is bound at residue glutamate 386. Arginine 467 contacts substrate. Residues lysine 469 and glutamate 475 each contribute to the ATP site. Valine 478–alanine 479 contributes to the substrate binding site.

The protein belongs to the eukaryotic GSH synthase family. As to quaternary structure, homodimer. It depends on Mg(2+) as a cofactor.

The catalysed reaction is gamma-L-glutamyl-L-cysteine + glycine + ATP = glutathione + ADP + phosphate + H(+). It functions in the pathway sulfur metabolism; glutathione biosynthesis; glutathione from L-cysteine and L-glutamate: step 2/2. This chain is Glutathione synthetase GSH2 (GSH2), found in Saccharomyces cerevisiae (strain ATCC 204508 / S288c) (Baker's yeast).